The sequence spans 353 residues: Quinolinate synthase (353 aa).

The iminosuccinate site is built by His-47 and Ser-68. Residue Cys-113 coordinates [4Fe-4S] cluster. Residues 139 to 141 and Ser-156 each bind iminosuccinate; that span reads YAN. Cys-200 provides a ligand contact to [4Fe-4S] cluster. Iminosuccinate-binding positions include 226 to 228 and Thr-243; that span reads HPE. A [4Fe-4S] cluster-binding site is contributed by Cys-297.

It belongs to the quinolinate synthase family. Type 1 subfamily. [4Fe-4S] cluster is required as a cofactor.

Its subcellular location is the cytoplasm. The enzyme catalyses iminosuccinate + dihydroxyacetone phosphate = quinolinate + phosphate + 2 H2O + H(+). It participates in cofactor biosynthesis; NAD(+) biosynthesis; quinolinate from iminoaspartate: step 1/1. In terms of biological role, catalyzes the condensation of iminoaspartate with dihydroxyacetone phosphate to form quinolinate. The chain is Quinolinate synthase from Vibrio parahaemolyticus serotype O3:K6 (strain RIMD 2210633).